A 396-amino-acid polypeptide reads, in one-letter code: DNA polymerase IV (396 aa).

Positions 2–182 constitute a UmuC domain; sequence ILHVDMDAFY…LPVSRLWGVG (181 aa). Residues Asp6 and Asp100 each contribute to the Mg(2+) site. Glu101 is a catalytic residue.

The protein belongs to the DNA polymerase type-Y family. As to quaternary structure, monomer. It depends on Mg(2+) as a cofactor.

The protein resides in the cytoplasm. The catalysed reaction is DNA(n) + a 2'-deoxyribonucleoside 5'-triphosphate = DNA(n+1) + diphosphate. In terms of biological role, poorly processive, error-prone DNA polymerase involved in untargeted mutagenesis. Copies undamaged DNA at stalled replication forks, which arise in vivo from mismatched or misaligned primer ends. These misaligned primers can be extended by PolIV. Exhibits no 3'-5' exonuclease (proofreading) activity. May be involved in translesional synthesis, in conjunction with the beta clamp from PolIII. This Rhodopirellula baltica (strain DSM 10527 / NCIMB 13988 / SH1) protein is DNA polymerase IV.